Consider the following 45-residue polypeptide: Scolopendra 20417.15 Da toxin (45 aa).

The disordered stretch occupies residues 26–45 (KVANGQEAGQPGAXNMKELH).

The protein belongs to the CRISP family. Venom allergen 5-like subfamily. In terms of processing, contains 3 disulfide bonds. As to expression, expressed by the venom gland.

It localises to the secreted. This Scolopendra viridicornis nigra (Brazilian giant centipede) protein is Scolopendra 20417.15 Da toxin.